The sequence spans 167 residues: Protein DLS1 (167 aa).

Serine 17 is modified (phosphoserine).

As to quaternary structure, component of the ISW2 complex, which at least consists of ISW2, ITC1, DLS1 and DPB4.

Its subcellular location is the nucleus. Functions as a component of the ISW2 complex, which acts in remodeling the chromatin by catalyzing an ATP-dependent alteration in the structure of nucleosomal DNA. The ISW2 complex is involved in coordinating transcriptional repression and in inheritance of telomeric silencing. It is involved in repression of MAT a-specific genes, INO1, and early meiotic genes during mitotic growth dependent upon transcription factor UME6 and in a parallel pathway to the RPD3-SIN3 histone deacetylase complex. DLS1 is partially required for the ISW2 complex chromatin remodeling activity and is not required for its interaction with chromatin. This is Protein DLS1 (DLS1) from Saccharomyces cerevisiae (strain ATCC 204508 / S288c) (Baker's yeast).